The chain runs to 269 residues: Diaminopimelate epimerase (269 aa).

2 residues coordinate substrate: Asn-20 and Asn-63. Residue Cys-72 is the Proton donor of the active site. Substrate contacts are provided by residues 73-74 (GN), Asn-179, and 197-198 (ER). Residue Cys-207 is the Proton acceptor of the active site. 208–209 (GT) provides a ligand contact to substrate.

This sequence belongs to the diaminopimelate epimerase family. In terms of assembly, homodimer.

It is found in the cytoplasm. The enzyme catalyses (2S,6S)-2,6-diaminopimelate = meso-2,6-diaminopimelate. It participates in amino-acid biosynthesis; L-lysine biosynthesis via DAP pathway; DL-2,6-diaminopimelate from LL-2,6-diaminopimelate: step 1/1. Catalyzes the stereoinversion of LL-2,6-diaminopimelate (L,L-DAP) to meso-diaminopimelate (meso-DAP), a precursor of L-lysine and an essential component of the bacterial peptidoglycan. The protein is Diaminopimelate epimerase of Chlamydia muridarum (strain MoPn / Nigg).